Reading from the N-terminus, the 728-residue chain is Catalase-peroxidase (728 aa).

Residues 91–218 (WHSAGTYRIA…LAAVQMGLIY (128 aa)) constitute a cross-link (tryptophyl-tyrosyl-methioninium (Trp-Tyr) (with M-244)). Catalysis depends on His-92, which acts as the Proton acceptor. A cross-link (tryptophyl-tyrosyl-methioninium (Tyr-Met) (with W-91)) is located at residues 218 to 244 (YVNPEGPDGNPDPVAAARDIRETFARM). A heme b-binding site is contributed by His-259.

This sequence belongs to the peroxidase family. Peroxidase/catalase subfamily. In terms of assembly, homodimer or homotetramer. Heme b serves as cofactor. In terms of processing, formation of the three residue Trp-Tyr-Met cross-link is important for the catalase, but not the peroxidase activity of the enzyme.

It catalyses the reaction H2O2 + AH2 = A + 2 H2O. The enzyme catalyses 2 H2O2 = O2 + 2 H2O. Bifunctional enzyme with both catalase and broad-spectrum peroxidase activity. This chain is Catalase-peroxidase, found in Burkholderia multivorans (strain ATCC 17616 / 249).